Here is a 501-residue protein sequence, read N- to C-terminus: DEAD-box ATP-dependent RNA helicase 36 (501 aa).

The segment at 1-68 (MEVDGEARPF…AAAVTEHAGD (68 aa)) is disordered. A compositionally biased stretch (pro residues) spans 36 to 46 (EEPPNPSPSPA). Positions 59-68 (AAAVTEHAGD) are enriched in low complexity. The Q motif signature appears at 77–105 (STFAELGLSQWLVDVCDSLGMRVPTAVQR). One can recognise a Helicase ATP-binding domain in the interval 108–281 (IPRALEGRDV…ELSGNNSYFF (174 aa)). Residue 121–128 (AETGSGKT) coordinates ATP. Residues 229–232 (DEAD) carry the DEAD box motif. The 165-residue stretch at 292 to 456 (TLKQLYIHVP…AYDGEMRDVN (165 aa)) folds into the Helicase C-terminal domain. A compositionally biased stretch (basic and acidic residues) spans 473–486 (MADEGHEDKVQARK). Positions 473–501 (MADEGHEDKVQARKEQKKRAQERKRKHDE) are disordered. Positions 475–501 (DEGHEDKVQARKEQKKRAQERKRKHDE) form a coiled coil. Residues 487–501 (EQKKRAQERKRKHDE) are compositionally biased toward basic residues.

This sequence belongs to the DEAD box helicase family. DDX49/DBP8 subfamily.

It catalyses the reaction ATP + H2O = ADP + phosphate + H(+). This chain is DEAD-box ATP-dependent RNA helicase 36, found in Oryza sativa subsp. japonica (Rice).